We begin with the raw amino-acid sequence, 574 residues long: Acetolactate synthase isozyme 3 large subunit (574 aa).

A thiamine diphosphate-binding site is contributed by glutamate 51. Residues arginine 153, histidine 261–arginine 282, and aspartate 304–aspartate 323 contribute to the FAD site. Positions glutamine 397–tyrosine 477 are thiamine pyrophosphate binding. Mg(2+)-binding residues include aspartate 448 and asparagine 475.

The protein belongs to the TPP enzyme family. Dimer of large and small chains. Mg(2+) serves as cofactor. Thiamine diphosphate is required as a cofactor.

The catalysed reaction is 2 pyruvate + H(+) = (2S)-2-acetolactate + CO2. It functions in the pathway amino-acid biosynthesis; L-isoleucine biosynthesis; L-isoleucine from 2-oxobutanoate: step 1/4. Its pathway is amino-acid biosynthesis; L-valine biosynthesis; L-valine from pyruvate: step 1/4. Sensitive to valine inhibition. This chain is Acetolactate synthase isozyme 3 large subunit (ilvI), found in Escherichia coli (strain K12).